We begin with the raw amino-acid sequence, 234 residues long: Transcription factor bHLH160 (234 aa).

Residues 1 to 13 (MSSQPNHQTSISS) show a composition bias toward polar residues. The interval 1-67 (MSSQPNHQTS…GAAKKQDHNA (67 aa)) is disordered. Positions 27–37 (IVEKESAEKDT) are enriched in basic and acidic residues. One can recognise a bHLH domain in the interval 60-115 (AKKQDHNAKERLRRMRLHASYLTLGTLLPDHSSSSSKKKWSAPSIIDNVITYIPKL).

The protein belongs to the bHLH protein family.

Its subcellular location is the nucleus. The polypeptide is Transcription factor bHLH160 (Arabidopsis thaliana (Mouse-ear cress)).